Here is a 291-residue protein sequence, read N- to C-terminus: ATP phosphoribosyltransferase 1 (291 aa).

It belongs to the ATP phosphoribosyltransferase family. Long subfamily. The cofactor is Mg(2+).

The protein resides in the cytoplasm. The catalysed reaction is 1-(5-phospho-beta-D-ribosyl)-ATP + diphosphate = 5-phospho-alpha-D-ribose 1-diphosphate + ATP. It functions in the pathway amino-acid biosynthesis; L-histidine biosynthesis; L-histidine from 5-phospho-alpha-D-ribose 1-diphosphate: step 1/9. Feedback inhibited by histidine. Catalyzes the condensation of ATP and 5-phosphoribose 1-diphosphate to form N'-(5'-phosphoribosyl)-ATP (PR-ATP). Has a crucial role in the pathway because the rate of histidine biosynthesis seems to be controlled primarily by regulation of HisG enzymatic activity. The protein is ATP phosphoribosyltransferase 1 of Geobacter sulfurreducens (strain ATCC 51573 / DSM 12127 / PCA).